The following is a 156-amino-acid chain: Small ribosomal subunit protein uS7 (156 aa).

The protein belongs to the universal ribosomal protein uS7 family. Part of the 30S ribosomal subunit. Contacts proteins S9 and S11.

Functionally, one of the primary rRNA binding proteins, it binds directly to 16S rRNA where it nucleates assembly of the head domain of the 30S subunit. Is located at the subunit interface close to the decoding center, probably blocks exit of the E-site tRNA. This Leifsonia xyli subsp. xyli (strain CTCB07) protein is Small ribosomal subunit protein uS7.